A 513-amino-acid chain; its full sequence is Solute carrier family 2, facilitated glucose transporter member 10 (513 aa).

The Cytoplasmic segment spans residues 1–6; it reads MGCSVL. A helical membrane pass occupies residues 7–27; the sequence is LLTITVSTLGGLVFGYELGII. The Extracellular portion of the chain corresponds to 28 to 46; the sequence is SGALPQLQTHFSLGCVQQE. Residues 47-67 form a helical membrane-spanning segment; the sequence is AVVSALLIGSLFASIIGGWLI. Residues 68–80 lie on the Cytoplasmic side of the membrane; that stretch reads DRHGRRTSILLSN. Residues 81–101 form a helical membrane-spanning segment; the sequence is LLILAGSVILTTGTSFFALVI. Residues 102-104 lie on the Extracellular side of the membrane; the sequence is GRA. A helical membrane pass occupies residues 105-125; that stretch reads VIGFAMTVSSMSCCIFVSEMV. Residues 126–130 are Cytoplasmic-facing; sequence TPERR. A helical transmembrane segment spans residues 131 to 151; it reads GLMVTLYEVGITVGILIAYAV. The Extracellular segment spans residues 152 to 164; sequence NYIFNNVPLTGWR. A helical transmembrane segment spans residues 165 to 185; it reads YMFGFAIIPSLIQLASIVLLP. Residues 186 to 236 lie on the Cytoplasmic side of the membrane; that stretch reads KQAEVFVIHDDDSRQADRLTEETETSNQHQQSEKYGVSDLFKSKDNMRRRT. The chain crosses the membrane as a helical span at residues 237 to 257; it reads VIGVGLVLSQQFTGQPNVLFY. Residue 246-247 participates in D-glucose binding; the sequence is QQ. The Extracellular portion of the chain corresponds to 258 to 272; sequence ASTILFSVGFQSNAS. Asparagine 270 carries N-linked (GlcNAc...) asparagine glycosylation. A helical membrane pass occupies residues 273-293; that stretch reads AILASVGFGIVKVIATLLAML. Over 294–301 the chain is Cytoplasmic; it reads CSDRAGRR. Residues 302-322 form a helical membrane-spanning segment; sequence SLLIGGCSMLAVGLILTGFLC. Residues 323–376 lie on the Extracellular side of the membrane; the sequence is RQSVIDTTKRCTSVGPHSNLTLSAEHDEGVGFSSQTLDVHEHLRSFSQSEDIYK. Asparagine 341 is a glycosylation site (N-linked (GlcNAc...) asparagine). A helical transmembrane segment spans residues 377–397; the sequence is WIIFTCLMAVVSAFSVSFGPM. The Cytoplasmic segment spans residues 398–422; it reads TWVVLSEIFPKDIRGRAFSFINCFN. Tryptophan 399 lines the D-glucose pocket. A run of 2 helical transmembrane segments spans residues 423 to 443 and 444 to 464; these read VGAN…IGLS and GVFL…YLVL. The Cytoplasmic portion of the chain corresponds to 465 to 513; it reads PETKGKSLQDIDRELSQTRMIHRQELCSIFQRRRFSPGYQRVQLTSTAT.

It belongs to the major facilitator superfamily. Sugar transporter (TC 2.A.1.1) family. Glucose transporter subfamily.

The protein resides in the endomembrane system. The protein localises to the cytoplasm. Its subcellular location is the perinuclear region. The enzyme catalyses D-glucose(out) = D-glucose(in). In terms of biological role, facilitative glucose transporter required for the development of the cardiovascular system. This Danio rerio (Zebrafish) protein is Solute carrier family 2, facilitated glucose transporter member 10.